A 1621-amino-acid polypeptide reads, in one-letter code: ALK tyrosine kinase receptor (1621 aa).

The signal sequence occupies residues 1-18 (MGAAGFLWLLPPLLLAAA). Topologically, residues 19–1042 (SYSGAATDQR…PHLPLSLILS (1024 aa)) are extracellular. Residues 48-70 (RLQRKSLAVDFVVPSLFRVYARD) are heparin-binding region. Asn-174, Asn-248, Asn-289, Asn-328, Asn-415, Asn-428, Asn-449, Asn-567, Asn-575, Asn-631, and Asn-673 each carry an N-linked (GlcNAc...) asparagine glycan. One can recognise an MAM 1 domain in the interval 268 to 431 (LECSFDFPCE…DFFALKNCSE (164 aa)). Positions 441–477 (LQSSFTCWNGTVLQLGQACDFHQDCAQGEDEGQLCSK) constitute an LDL-receptor class A domain. In terms of domain architecture, MAM 2 spans 482-640 (FYCNFENGFC…NISISLDCYL (159 aa)). A disulfide bridge connects residues Cys-692 and Cys-705. The N-linked (GlcNAc...) asparagine glycan is linked to Asn-713. Cys-787 and Cys-798 form a disulfide bridge. 3 N-linked (GlcNAc...) asparagine glycosylation sites follow: Asn-812, Asn-868, and Asn-890. Residues Cys-910 and Cys-932 are joined by a disulfide bond. An N-linked (GlcNAc...) asparagine glycan is attached at Asn-990. 3 disulfides stabilise this stretch: Cys-991–Cys-999, Cys-994–Cys-1010, and Cys-1012–Cys-1025. The tract at residues 991–1029 (CSHCEVDECHMDPESHKVICFCDHGTVLADDGVSCIVSP) is EGF-like. A helical transmembrane segment spans residues 1043–1063 (VVTSALVAALVLAFSGIMIVY). At 1064–1621 (RRKHQELQAM…SKNKVTQPGP (558 aa)) the chain is on the cytoplasmic side. A phosphotyrosine mark is found at Tyr-1082, Tyr-1096, and Tyr-1100. Residues 1120–1396 (ITLIRGLGHG…IEYCTQDPDV (277 aa)) enclose the Protein kinase domain. ATP contacts are provided by residues 1126–1134 (LGHGAFGEV) and His-1128. Tyr-1135 carries the post-translational modification Phosphotyrosine. ATP-binding positions include Lys-1154 and 1201 to 1203 (ELM). The active-site Proton acceptor is Asp-1253. Position 1274 (Asp-1274) interacts with ATP. At Tyr-1282 the chain carries Phosphotyrosine. The interval 1412–1556 (EEKVPMRPKD…WTGPGAGPRR (145 aa)) is disordered. Positions 1414–1423 (KVPMRPKDPE) are enriched in basic and acidic residues. Residues 1441–1461 (SAAPQPAALTAPGPSVKKPPG) show a composition bias toward low complexity. Over residues 1462-1472 (AGAGAGAGAGA) the composition is skewed to gly residues. A compositionally biased stretch (polar residues) spans 1506 to 1518 (NKPTSLWNPTYGS). The residue at position 1516 (Tyr-1516) is a Phosphotyrosine. Positions 1543-1552 (AEGGWTGPGA) are enriched in gly residues.

Belongs to the protein kinase superfamily. Tyr protein kinase family. Insulin receptor subfamily. In terms of assembly, homodimer; homodimerizes following heparin- and ligand-binding. Interacts with CBL, IRS1, PIK3R1 and PLCG1. Interacts with FRS2 and SHC1. Interacts with PTN and MDK. In terms of processing, phosphorylated at tyrosine residues by autocatalysis, which activates kinase activity. In cells not stimulated by a ligand, receptor protein tyrosine phosphatase beta and zeta complex (PTPRB/PTPRZ1) dephosphorylates ALK at the sites in ALK that are undergoing autophosphorylation through autoactivation. As to expression, mainly expressed in central nervous system (CNS) and other parts of the brain such as the paraventricular nucleus (PVN) of the hypothalamus. Expression is also found in peripheral nervous systems, eye, nasal epithelium, olfactory nerve, tongue, skin, tissue surrounding the esophagus, stomach, midgut, as well as testis and ovary.

It is found in the cell membrane. It carries out the reaction L-tyrosyl-[protein] + ATP = O-phospho-L-tyrosyl-[protein] + ADP + H(+). Activated upon ALKAL2 ligand-binding. ALKAL2-driven activation is coupled with heparin-binding. Following ligand-binding, homodimerizes and autophosphorylates, activating its kinase activity. Inactivated through dephosphorylation by receptor protein tyrosine phosphatase beta and zeta complex (PTPRB/PTPRZ1) when there is no stimulation by a ligand. Neuronal receptor tyrosine kinase that is essentially and transiently expressed in specific regions of the central and peripheral nervous systems and plays an important role in the genesis and differentiation of the nervous system. Also acts as a key thinness protein involved in the resistance to weight gain: in hypothalamic neurons, controls energy expenditure acting as a negative regulator of white adipose tissue lipolysis and sympathetic tone to fine-tune energy homeostasis. Following activation by ALKAL2 ligand at the cell surface, transduces an extracellular signal into an intracellular response. In contrast, ALKAL1 is not a potent physiological ligand for ALK. Ligand-binding to the extracellular domain induces tyrosine kinase activation, leading to activation of the mitogen-activated protein kinase (MAPK) pathway. Phosphorylates almost exclusively at the first tyrosine of the Y-x-x-x-Y-Y motif. Induces tyrosine phosphorylation of CBL, FRS2, IRS1 and SHC1, as well as of the MAP kinases MAPK1/ERK2 and MAPK3/ERK1. ALK activation may also be regulated by pleiotrophin (PTN) and midkine (MDK). PTN-binding induces MAPK pathway activation, which is important for the anti-apoptotic signaling of PTN and regulation of cell proliferation. MDK-binding induces phosphorylation of the ALK target insulin receptor substrate (IRS1), activates mitogen-activated protein kinases (MAPKs) and PI3-kinase, resulting also in cell proliferation induction. Drives NF-kappa-B activation, probably through IRS1 and the activation of the AKT serine/threonine kinase. Recruitment of IRS1 to activated ALK and the activation of NF-kappa-B are essential for the autocrine growth and survival signaling of MDK. The protein is ALK tyrosine kinase receptor of Mus musculus (Mouse).